Here is a 254-residue protein sequence, read N- to C-terminus: Keratin-associated protein 24-1 (254 aa).

A run of 6 repeats spans residues 193–202, 203–212, 213–222, 223–232, 233–242, and 243–252. The interval 193 to 252 is 6 X 10 AA repeats of Y-[ILR]-[SVPC]-[NRTS]-[SNTG]-X-[QHRP]-[PSY]-[QSL]-[SRK]; it reads YISNSCQPQSYLVRNYHYSSYRPTSCRPLSYLSRSFRSLSYIPSTFPPLRYLCSGSRPLK.

Belongs to the PMG family. In terms of assembly, interacts with hair keratins. Specific expression in the middle/upper hair cuticle.

In terms of biological role, in the hair cortex, hair keratin intermediate filaments are embedded in an interfilamentous matrix, consisting of hair keratin-associated proteins (KRTAP), which are essential for the formation of a rigid and resistant hair shaft through their extensive disulfide bond cross-linking with abundant cysteine residues of hair keratins. The matrix proteins include the high-sulfur and high-glycine-tyrosine keratins. The sequence is that of Keratin-associated protein 24-1 (KRTAP24-1) from Homo sapiens (Human).